The primary structure comprises 465 residues: MSFLWDIMPIDKHLSTVPETEGCQQRIETRICALPDDLLLQILPHVPTKEAVATSILSKQWRYVWLMLPKLEFKDEGSESVGWFIKKSLQLHKAPKLDCLIVELGPHCPIDVDVRKWVENAVNRDVKDLDFTLLWSAAPTSFPKSLYTCDTLVCLTLSNQILVDVSSPASLPSLLDLSLHYVVYKDDGSLVRLLSSSPVLKRLSVHSHEDDNLKTFTVKVSSLESLNYDENWLKDEVEDNEVDEVVDNEVEVDDLNGSLVIDSPALKELHLSEVWDYCLIENMSFLDEAFISNVPYPDEKFLRSLSSVKHLFLLFSKSMVACCNAIKFSWLIEFYFFPISLVDWLMPLMFLLQNSPKLKTPTIDNDFECLSLSWNQPSSIPGCLLSHLETFRWRGYGGREDAKKLLMTYILANSKCLKTVEISLLATCNLEETQKELKSMPRISQSSQLLISTKKLWRINERTYL.

The 47-residue stretch at 28–74 (ETRICALPDDLLLQILPHVPTKEAVATSILSKQWRYVWLMLPKLEFK) folds into the F-box domain. LRR repeat units follow at residues 154 to 181 (CLTL…SLHY), 182 to 207 (VVYK…SVHS), 210 to 230 (DDNL…NYDE), 248 to 273 (NEVE…HLSE), and 339 to 365 (ISLV…TIDN). One can recognise an FBD domain in the interval 373–424 (SWNQPSSIPGCLLSHLETFRWRGYGGREDAKKLLMTYILANSKCLKTVEISL).

This chain is Putative F-box/FBD/LRR-repeat protein At1g22000, found in Arabidopsis thaliana (Mouse-ear cress).